Consider the following 623-residue polypeptide: Fanconi anemia group G protein homolog (623 aa).

TPR repeat units follow at residues 251-284 (VQVY…GTTC), 349-382 (SQAK…LLGG), 458-491 (SATH…LFRT), and 517-550 (VAAL…CPGN).

As to quaternary structure, belongs to the multisubunit FA complex composed of FANCA, FANCB, FANCC, FANCE, FANCF, FANCG, FANCL/PHF9 and FANCM. In complex with FANCF, FANCA and FANCL, but not with FANCC, nor FANCE, interacts with HES1; this interaction may be essential for the stability and nuclear localization of FA core complex proteins. The complex with FANCC and FANCG may also include EIF2AK2 and HSP70. As to expression, highest expression levels in spleen, thymus and testis.

It localises to the nucleus. Functionally, DNA repair protein that may operate in a postreplication repair or a cell cycle checkpoint function. May be implicated in interstrand DNA cross-link repair and in the maintenance of normal chromosome stability. Candidate tumor suppressor gene. This Mus musculus (Mouse) protein is Fanconi anemia group G protein homolog (Fancg).